The primary structure comprises 268 residues: Undecaprenyl-diphosphatase (268 aa).

The next 7 helical transmembrane spans lie at 47-67 (FAILIQLGAILAIVALYFFKL), 83-103 (FIIGVLIAFLPAVIIGLIAGK), 109-129 (LFDPWVVCFSLIVGGAILLWV), 144-164 (YPLMMYLWIGVAQCLAMIPGV), 184-204 (AAEFSFFLAIPTMVGAFVYDF), 218-238 (LIAIGFVVSFITAMIVVKAFL), and 246-266 (FVLFAWWRVIVGTLGLIALAL).

Belongs to the UppP family.

The protein resides in the cell inner membrane. It carries out the reaction di-trans,octa-cis-undecaprenyl diphosphate + H2O = di-trans,octa-cis-undecaprenyl phosphate + phosphate + H(+). In terms of biological role, catalyzes the dephosphorylation of undecaprenyl diphosphate (UPP). Confers resistance to bacitracin. The protein is Undecaprenyl-diphosphatase of Bradyrhizobium sp. (strain ORS 278).